A 463-amino-acid polypeptide reads, in one-letter code: L-seryl-tRNA(Sec) selenium transferase (463 aa).

At Lys295 the chain carries N6-(pyridoxal phosphate)lysine.

It belongs to the SelA family. Homodecamer; pentamer of dimers. Binds only one seryl-tRNA(Sec) per dimer. Pyridoxal 5'-phosphate is required as a cofactor.

Its subcellular location is the cytoplasm. The enzyme catalyses L-seryl-tRNA(Sec) + selenophosphate + H(+) = L-selenocysteinyl-tRNA(Sec) + phosphate. It participates in aminoacyl-tRNA biosynthesis; selenocysteinyl-tRNA(Sec) biosynthesis; selenocysteinyl-tRNA(Sec) from L-seryl-tRNA(Sec) (bacterial route): step 1/1. Converts seryl-tRNA(Sec) to selenocysteinyl-tRNA(Sec) required for selenoprotein biosynthesis. This chain is L-seryl-tRNA(Sec) selenium transferase, found in Salmonella arizonae (strain ATCC BAA-731 / CDC346-86 / RSK2980).